The primary structure comprises 176 residues: Translation initiation factor IF-3 (176 aa).

Belongs to the IF-3 family. In terms of assembly, monomer.

It is found in the cytoplasm. In terms of biological role, IF-3 binds to the 30S ribosomal subunit and shifts the equilibrium between 70S ribosomes and their 50S and 30S subunits in favor of the free subunits, thus enhancing the availability of 30S subunits on which protein synthesis initiation begins. This Streptococcus uberis (strain ATCC BAA-854 / 0140J) protein is Translation initiation factor IF-3.